A 271-amino-acid polypeptide reads, in one-letter code: Centromere protein K (271 aa).

2 coiled-coil regions span residues 11–44 (DTIT…QNKL) and 102–151 (LRCD…VENQ).

Belongs to the CENP-K/MCM22 family. Component of the CENPA-CAD complex, composed of CENPI, CENPK, CENPL, CENPO, CENPP, CENPQ, CENPR and CENPS. The CENPA-CAD complex interacts with the CENPA-NAC complex, at least composed of CENPA, CENPC, CENPH, CENPM, CENPN, CENPT and CENPU. May interact with Sox6. As to expression, highly expressed in testis.

Its subcellular location is the nucleus. It is found in the chromosome. It localises to the centromere. The protein localises to the kinetochore. Functionally, component of the CENPA-CAD (nucleosome distal) complex, a complex recruited to centromeres which is involved in assembly of kinetochore proteins, mitotic progression and chromosome segregation. May be involved in incorporation of newly synthesized CENPA into centromeres via its interaction with the CENPA-NAC complex. Acts in coordination with KNL1 to recruit the NDC80 complex to the outer kinetochore. This Mus musculus (Mouse) protein is Centromere protein K (Cenpk).